Reading from the N-terminus, the 248-residue chain is NADP-dependent 3-hydroxy acid dehydrogenase YdfG (248 aa).

NADP(+) contacts are provided by residues 7 to 12, 32 to 33, 54 to 55, and N81; these read GATAGF, RR, and DV. Substrate is bound at residue S134. NADP(+) contacts are provided by residues Y147, K151, and 177-185; that span reads PGLVGGTEF. Y147 acts as the Proton acceptor in catalysis.

Belongs to the short-chain dehydrogenases/reductases (SDR) family. In terms of assembly, homotetramer.

The catalysed reaction is 3-hydroxypropanoate + NADP(+) = 3-oxopropanoate + NADPH + H(+). It carries out the reaction L-allo-threonine + NADP(+) = aminoacetone + CO2 + NADPH. Functionally, NADP-dependent dehydrogenase with broad substrate specificity acting on 3-hydroxy acids. Catalyzes the NADP-dependent oxidation of L-allo-threonine to L-2-amino-3-keto-butyrate, which is spontaneously decarboxylated into aminoacetone. Also acts on D-threonine, L-serine, D-serine, D-3-hydroxyisobutyrate, L-3-hydroxyisobutyrate, D-glycerate and L-glycerate. Able to catalyze the reduction of the malonic semialdehyde to 3-hydroxypropionic acid. YdfG is apparently supplementing RutE, the presumed malonic semialdehyde reductase involved in pyrimidine degradation since both are able to detoxify malonic semialdehyde. This Escherichia coli (strain K12) protein is NADP-dependent 3-hydroxy acid dehydrogenase YdfG.